The primary structure comprises 357 residues: D-alanine--D-alanine ligase (357 aa).

In terms of domain architecture, ATP-grasp spans 134 to 339; that stretch reads KQLFEHRGLP…YPDLIAKLID (206 aa). 167–222 lines the ATP pocket; that stretch reads NDKLTYPVFVKPANLGSSVGISKCNNEEELKSGIAEAFQFDRKLVIEQGINAREIE. Mg(2+) is bound by residues D293, E306, and N308.

It belongs to the D-alanine--D-alanine ligase family. The cofactor is Mg(2+). Mn(2+) serves as cofactor.

It localises to the cytoplasm. The catalysed reaction is 2 D-alanine + ATP = D-alanyl-D-alanine + ADP + phosphate + H(+). The protein operates within cell wall biogenesis; peptidoglycan biosynthesis. Functionally, cell wall formation. In Staphylococcus epidermidis (strain ATCC 35984 / DSM 28319 / BCRC 17069 / CCUG 31568 / BM 3577 / RP62A), this protein is D-alanine--D-alanine ligase.